The sequence spans 333 residues: NADH-quinone oxidoreductase subunit H (333 aa).

8 helical membrane passes run 8–28 (VLAAALIALAFVAVNAAYLVW), 75–95 (ILFMVAPVLAMFPALMSFVTI), 108–128 (IGLLVILAFASFAGLAILLAG), 154–174 (MLITAITVVLVSGSVDFIEIV), 191–211 (PGLFNIFMPISFLIFFICSLA), 251–271 (IVIGACLTTLLFLGGWDCPFG), 273–293 (FPGVWWFLIKIYILIFTFIWI), and 312–332 (ILIPLSLINLLLTAGFIKVFA).

This sequence belongs to the complex I subunit 1 family. NDH-1 is composed of 14 different subunits. Subunits NuoA, H, J, K, L, M, N constitute the membrane sector of the complex.

It is found in the cell inner membrane. It catalyses the reaction a quinone + NADH + 5 H(+)(in) = a quinol + NAD(+) + 4 H(+)(out). Its function is as follows. NDH-1 shuttles electrons from NADH, via FMN and iron-sulfur (Fe-S) centers, to quinones in the respiratory chain. The immediate electron acceptor for the enzyme in this species is believed to be ubiquinone. Couples the redox reaction to proton translocation (for every two electrons transferred, four hydrogen ions are translocated across the cytoplasmic membrane), and thus conserves the redox energy in a proton gradient. This subunit may bind ubiquinone. This Desulfotalea psychrophila (strain LSv54 / DSM 12343) protein is NADH-quinone oxidoreductase subunit H.